Here is a 132-residue protein sequence, read N- to C-terminus: Small ribosomal subunit protein uS8 (132 aa).

This sequence belongs to the universal ribosomal protein uS8 family. As to quaternary structure, part of the 30S ribosomal subunit. Contacts proteins S5 and S12.

Its function is as follows. One of the primary rRNA binding proteins, it binds directly to 16S rRNA central domain where it helps coordinate assembly of the platform of the 30S subunit. In Limosilactobacillus fermentum (strain NBRC 3956 / LMG 18251) (Lactobacillus fermentum), this protein is Small ribosomal subunit protein uS8.